Consider the following 599-residue polypeptide: Elongation factor 4 (599 aa).

One can recognise a tr-type G domain in the interval 5-187 (SHIRNFSIVA…SIVQNLPAPK (183 aa)). GTP-binding positions include 17–22 (DHGKST) and 134–137 (NKID).

Belongs to the TRAFAC class translation factor GTPase superfamily. Classic translation factor GTPase family. LepA subfamily.

Its subcellular location is the cell inner membrane. The enzyme catalyses GTP + H2O = GDP + phosphate + H(+). In terms of biological role, required for accurate and efficient protein synthesis under certain stress conditions. May act as a fidelity factor of the translation reaction, by catalyzing a one-codon backward translocation of tRNAs on improperly translocated ribosomes. Back-translocation proceeds from a post-translocation (POST) complex to a pre-translocation (PRE) complex, thus giving elongation factor G a second chance to translocate the tRNAs correctly. Binds to ribosomes in a GTP-dependent manner. The protein is Elongation factor 4 of Roseobacter denitrificans (strain ATCC 33942 / OCh 114) (Erythrobacter sp. (strain OCh 114)).